The chain runs to 190 residues: Pyridoxal 5'-phosphate synthase subunit PdxT (190 aa).

Position 46–48 (46–48 (GES)) interacts with L-glutamine. Cysteine 78 serves as the catalytic Nucleophile. L-glutamine contacts are provided by residues arginine 106 and 135–136 (IR). Residues histidine 171 and glutamate 173 each act as charge relay system in the active site.

This sequence belongs to the glutaminase PdxT/SNO family. As to quaternary structure, in the presence of PdxS, forms a dodecamer of heterodimers. Only shows activity in the heterodimer.

The catalysed reaction is aldehydo-D-ribose 5-phosphate + D-glyceraldehyde 3-phosphate + L-glutamine = pyridoxal 5'-phosphate + L-glutamate + phosphate + 3 H2O + H(+). The enzyme catalyses L-glutamine + H2O = L-glutamate + NH4(+). It functions in the pathway cofactor biosynthesis; pyridoxal 5'-phosphate biosynthesis. Functionally, catalyzes the hydrolysis of glutamine to glutamate and ammonia as part of the biosynthesis of pyridoxal 5'-phosphate. The resulting ammonia molecule is channeled to the active site of PdxS. The protein is Pyridoxal 5'-phosphate synthase subunit PdxT of Dictyoglomus turgidum (strain DSM 6724 / Z-1310).